Here is a 1578-residue protein sequence, read N- to C-terminus: Mediator of RNA polymerase II transcription subunit 14 (1578 aa).

An LXXLL motif 1 motif is present at residues 49 to 53; the sequence is LAELL. The segment at 561 to 582 is disordered; the sequence is SQSVTAGGTSQSSAPSAATTES. Low complexity predominate over residues 565 to 580; it reads TAGGTSQSSAPSAATT. The LXXLL motif 2 motif lies at 739–743; that stretch reads LKRLL. Disordered stretches follow at residues 1009-1173 and 1510-1578; these read RRRS…PDHK and APGG…GGPN. The span at 1084–1093 shows a compositional bias: polar residues; it reads SQSHPNFNMT. Pro residues-rich tracts occupy residues 1095 to 1104 and 1157 to 1167; these read PPAPHMPHPS and PGMPRPSPRPG. Gly residues-rich tracts occupy residues 1510 to 1521 and 1547 to 1578; these read APGGPGGPGPMG and MGGG…GGPN.

It belongs to the Mediator complex subunit 14 family. As to quaternary structure, component of the Mediator complex.

It localises to the nucleus. Component of the Mediator complex, a coactivator involved in the regulated transcription of nearly all RNA polymerase II-dependent genes. Mediator functions as a bridge to convey information from gene-specific regulatory proteins to the basal RNA polymerase II transcription machinery. Mediator is recruited to promoters by direct interactions with regulatory proteins and serves as a scaffold for the assembly of a functional preinitiation complex with RNA polymerase II and the general transcription factors. The polypeptide is Mediator of RNA polymerase II transcription subunit 14 (MED14) (Aedes aegypti (Yellowfever mosquito)).